Reading from the N-terminus, the 835-residue chain is Protein translocase subunit SecA (835 aa).

ATP is bound by residues glutamine 85, 103–107, and aspartate 492; that span reads GEGKT. Residues cysteine 819, cysteine 821, cysteine 830, and cysteine 831 each contribute to the Zn(2+) site.

It belongs to the SecA family. As to quaternary structure, monomer and homodimer. Part of the essential Sec protein translocation apparatus which comprises SecA, SecYEG and auxiliary proteins SecDF. Other proteins may also be involved. The cofactor is Zn(2+).

It is found in the cell membrane. Its subcellular location is the cytoplasm. It carries out the reaction ATP + H2O + cellular proteinSide 1 = ADP + phosphate + cellular proteinSide 2.. Its function is as follows. Part of the Sec protein translocase complex. Interacts with the SecYEG preprotein conducting channel. Has a central role in coupling the hydrolysis of ATP to the transfer of proteins into and across the cell membrane, serving as an ATP-driven molecular motor driving the stepwise translocation of polypeptide chains across the membrane. This is Protein translocase subunit SecA from Clostridium botulinum (strain ATCC 19397 / Type A).